The sequence spans 246 residues: MTPSIDALRDFRASTCNLVGTPTVTNDLSENIILTSLDDLHNWARLSSLWPLLYGTACCFIEFAALIGSRFDFDRFGLVPRSSPRQADLIIVAGTVTMKMAPALVRLYEQMPEPKYVIAMGACTITGGMFSSDSTTAVRGVDKLIPVDLYLPGCPPRPEAIFDAVIKLRKKVGNEALRERGKLLPTHRYFTVAHKMKQVKPIITGTYLRAKTQQNALQAGVALPVDFKAEALPTKVILSNSLSLDN.

Cys-58, Cys-59, Cys-123, and Cys-154 together coordinate [4Fe-4S] cluster.

Belongs to the complex I 20 kDa subunit family. As to quaternary structure, NDH-1 is composed of 14 different subunits. Subunits nuoB, C, D, E, F, and G constitute the peripheral sector of the complex. It depends on [4Fe-4S] cluster as a cofactor.

It is found in the plastid. Its subcellular location is the organellar chromatophore thylakoid membrane. It carries out the reaction a quinone + NADH + H(+) = a quinol + NAD(+). In terms of biological role, NDH-1 shuttles electrons from NADH, via FMN and iron-sulfur (Fe-S) centers, to quinones in the respiratory chain. Couples the redox reaction to proton translocation (for every two electrons transferred, four hydrogen ions are translocated across the cytoplasmic membrane), and thus conserves the redox energy in a proton gradient. The chain is NAD(P)H-quinone oxidoreductase subunit K, organellar chromatophore from Paulinella chromatophora.